Reading from the N-terminus, the 117-residue chain is Membrane-anchored ubiquitin-fold protein 1 (117 aa).

Residues 8-74 (LEIKFRLTDG…LENSKTVKDY (67 aa)) form the Ubiquitin-like domain. C112 carries S-palmitoyl cysteine lipidation. C114 carries the post-translational modification Cysteine methyl ester. C114 carries S-farnesyl cysteine lipidation. Residues 115–117 (SVM) constitute a propeptide, removed in mature form.

Its subcellular location is the cell membrane. Its function is as follows. May serve as docking site to facilitate the association of other proteins to the plasma membrane. The protein is Membrane-anchored ubiquitin-fold protein 1 (MUB1) of Arabidopsis thaliana (Mouse-ear cress).